Reading from the N-terminus, the 172-residue chain is MDLTNYIASIKDYPKAGITFRDISPLMADGKAYSYAIREIAQYACDKDIDMVVGPEARGFIIGCPVAVELGIGFAPVRKPGKLPRDVVSADYEKEYGLDTLTMHADAIKPGQRVLIVDDLLATGGTVKATIEMIEKLGGIVAGCAFLIELKGLNGRHAIRNYDYKVLMQFPG.

The protein belongs to the purine/pyrimidine phosphoribosyltransferase family. In terms of assembly, homodimer.

Its subcellular location is the cytoplasm. It carries out the reaction AMP + diphosphate = 5-phospho-alpha-D-ribose 1-diphosphate + adenine. Its pathway is purine metabolism; AMP biosynthesis via salvage pathway; AMP from adenine: step 1/1. Catalyzes a salvage reaction resulting in the formation of AMP, that is energically less costly than de novo synthesis. The protein is Adenine phosphoribosyltransferase of Streptococcus pyogenes serotype M5 (strain Manfredo).